Here is a 182-residue protein sequence, read N- to C-terminus: Fimbrial subunit type 1 (182 aa).

Positions 1-23 are cleaved as a signal peptide; that stretch reads MKIKTLAIVVLSALSLSSAAALA. A disulfide bond links cysteine 44 and cysteine 84.

Belongs to the fimbrial protein family.

It localises to the fimbrium. The protein is Fimbrial subunit type 1 of Klebsiella pneumoniae.